A 244-amino-acid chain; its full sequence is 1-(5-phosphoribosyl)-5-[(5-phosphoribosylamino)methylideneamino] imidazole-4-carboxamide isomerase (244 aa).

D12 functions as the Proton acceptor in the catalytic mechanism. Catalysis depends on D131, which acts as the Proton donor.

The protein belongs to the HisA/HisF family.

It localises to the cytoplasm. The enzyme catalyses 1-(5-phospho-beta-D-ribosyl)-5-[(5-phospho-beta-D-ribosylamino)methylideneamino]imidazole-4-carboxamide = 5-[(5-phospho-1-deoxy-D-ribulos-1-ylimino)methylamino]-1-(5-phospho-beta-D-ribosyl)imidazole-4-carboxamide. It participates in amino-acid biosynthesis; L-histidine biosynthesis; L-histidine from 5-phospho-alpha-D-ribose 1-diphosphate: step 4/9. This chain is 1-(5-phosphoribosyl)-5-[(5-phosphoribosylamino)methylideneamino] imidazole-4-carboxamide isomerase, found in Nocardioides sp. (strain ATCC BAA-499 / JS614).